The sequence spans 358 residues: Isopentenyl-diphosphate delta-isomerase (358 aa).

12–13 (RK) contacts substrate. Residues 69–71 (AMT), S99, and N128 each bind FMN. Residue Q158 coordinates substrate. Position 159 (E159) interacts with Mg(2+). Residues K190, T220, 267–269 (GIR), and 288–289 (AG) each bind FMN.

Belongs to the IPP isomerase type 2 family. Homooctamer. Dimer of tetramers. It depends on FMN as a cofactor. Requires NADPH as cofactor. Mg(2+) is required as a cofactor.

It localises to the cytoplasm. It catalyses the reaction isopentenyl diphosphate = dimethylallyl diphosphate. Its function is as follows. Involved in the biosynthesis of isoprenoids. Catalyzes the 1,3-allylic rearrangement of the homoallylic substrate isopentenyl (IPP) to its allylic isomer, dimethylallyl diphosphate (DMAPP). This chain is Isopentenyl-diphosphate delta-isomerase, found in Listeria innocua serovar 6a (strain ATCC BAA-680 / CLIP 11262).